The primary structure comprises 244 residues: Small ribosomal subunit protein eS4 (244 aa).

Residues 1–14 are compositionally biased toward basic residues; it reads MANKGPRKHLKRLP. The interval 1–36 is disordered; that stretch reads MANKGPRKHLKRLPAPKNWQISRKTNKYTTRPSAGP. A compositionally biased stretch (polar residues) spans 19–32; it reads WQISRKTNKYTTRP. The S4 RNA-binding domain maps to 43–106; the sequence is LPLLLVLRDL…NESFLVVLDE (64 aa).

The protein belongs to the eukaryotic ribosomal protein eS4 family.

In Methanococcus aeolicus (strain ATCC BAA-1280 / DSM 17508 / OCM 812 / Nankai-3), this protein is Small ribosomal subunit protein eS4.